The chain runs to 139 residues: D-ribose pyranase (139 aa).

His20 (proton donor) is an active-site residue. Substrate is bound by residues Asp28, His106, and 128 to 130; that span reads YAN.

It belongs to the RbsD / FucU family. RbsD subfamily. In terms of assembly, homodecamer.

The protein resides in the cytoplasm. The enzyme catalyses beta-D-ribopyranose = beta-D-ribofuranose. It participates in carbohydrate metabolism; D-ribose degradation; D-ribose 5-phosphate from beta-D-ribopyranose: step 1/2. Catalyzes the interconversion of beta-pyran and beta-furan forms of D-ribose. In Escherichia coli O45:K1 (strain S88 / ExPEC), this protein is D-ribose pyranase.